Reading from the N-terminus, the 293-residue chain is MALRLDGKQLAAQLEVRLQQQIQKGIAAAGRSPGLAVLRIGDDPASAVYVRNKEKACARIGVESFGSHLPADASQQEVLTAIRELNADDRVDGILLQLPLPEGLDETPLLAEIDPNKDADGLHTLNLGRLLKGEQGPRSCTPAGVMVMLRDQGIDPAGKRAVVVGRSILVGQPMALMLQAANATVTVAHSRTQHLESITRQAEILVVAAGRPEMIGADHITPGCVVVDVGIHRRPEGGLCGDVCAEELEPVAAALSPVPGGVGPMTVTMLLVNTVLAWCRRHQVALELSDLVV.

Residues glycine 165 to serine 167, serine 190, and isoleucine 231 each bind NADP(+).

The protein belongs to the tetrahydrofolate dehydrogenase/cyclohydrolase family. As to quaternary structure, homodimer.

The catalysed reaction is (6R)-5,10-methylene-5,6,7,8-tetrahydrofolate + NADP(+) = (6R)-5,10-methenyltetrahydrofolate + NADPH. It catalyses the reaction (6R)-5,10-methenyltetrahydrofolate + H2O = (6R)-10-formyltetrahydrofolate + H(+). It functions in the pathway one-carbon metabolism; tetrahydrofolate interconversion. In terms of biological role, catalyzes the oxidation of 5,10-methylenetetrahydrofolate to 5,10-methenyltetrahydrofolate and then the hydrolysis of 5,10-methenyltetrahydrofolate to 10-formyltetrahydrofolate. In Synechococcus sp. (strain CC9311), this protein is Bifunctional protein FolD.